The chain runs to 71 residues: Small ribosomal subunit protein bS21 (71 aa).

The segment at 40-71 is disordered; it reads KPTQVRKRKQAAAVKRHMKRLNREQQRRQRPY. A compositionally biased stretch (basic residues) spans 43–59; the sequence is QVRKRKQAAAVKRHMKR. The segment covering 60–71 has biased composition (basic and acidic residues); the sequence is LNREQQRRQRPY.

It belongs to the bacterial ribosomal protein bS21 family.

This chain is Small ribosomal subunit protein bS21, found in Halorhodospira halophila (strain DSM 244 / SL1) (Ectothiorhodospira halophila (strain DSM 244 / SL1)).